The following is a 36-amino-acid chain: Dermonecrotic toxin LgSicTox-beta-LOXN1/LOXN7 (36 aa).

The protein belongs to the arthropod phospholipase D family. Class II subfamily. Requires Mg(2+) as cofactor. Post-translationally, contains 2 disulfide bonds. In terms of tissue distribution, expressed by the venom gland.

The protein localises to the secreted. The catalysed reaction is an N-(acyl)-sphingosylphosphocholine = an N-(acyl)-sphingosyl-1,3-cyclic phosphate + choline. It catalyses the reaction an N-(acyl)-sphingosylphosphoethanolamine = an N-(acyl)-sphingosyl-1,3-cyclic phosphate + ethanolamine. It carries out the reaction a 1-acyl-sn-glycero-3-phosphocholine = a 1-acyl-sn-glycero-2,3-cyclic phosphate + choline. The enzyme catalyses a 1-acyl-sn-glycero-3-phosphoethanolamine = a 1-acyl-sn-glycero-2,3-cyclic phosphate + ethanolamine. Its function is as follows. Dermonecrotic toxins cleave the phosphodiester linkage between the phosphate and headgroup of certain phospholipids (sphingolipid and lysolipid substrates), forming an alcohol (often choline) and a cyclic phosphate. This toxin acts on sphingomyelin (SM). It may also act on ceramide phosphoethanolamine (CPE), lysophosphatidylcholine (LPC) and lysophosphatidylethanolamine (LPE), but not on lysophosphatidylserine (LPS), and lysophosphatidylglycerol (LPG). It acts by transphosphatidylation, releasing exclusively cyclic phosphate products as second products. Induces dermonecrosis, hemolysis, increased vascular permeability, edema, inflammatory response, and platelet aggregation. This chain is Dermonecrotic toxin LgSicTox-beta-LOXN1/LOXN7, found in Loxosceles gaucho (Spider).